The following is a 269-amino-acid chain: Activator of basal transcription 1 (269 aa).

Residues 1–40 (MVKAGELVEQQKAAMEEEANAEAAEDQEEPEDTACSSSSK) form a disordered region. The stretch at 5–29 (GELVEQQKAAMEEEANAEAAEDQEE) forms a coiled coil. Positions 16-32 (EEEANAEAAEDQEEPED) are enriched in acidic residues. An RRM domain is found at 48-145 (GIVYLGHVPP…RKRSPFRYDL (98 aa)). Positions 164 to 194 (AFERQVRRQRLRAEVAQAKRETDFYLRNVEQ) form a coiled coil. A disordered region spans residues 220 to 244 (EQEFRARKAARPGGRERARLANVED).

It belongs to the ESF2/ABP1 family. In terms of assembly, interacts with ESF1/ABTAP. Interacts with IGHMBP2. As to expression, ubiquitously expressed.

It localises to the nucleus. It is found in the nucleolus. In terms of biological role, could be a novel TATA-binding protein (TBP) which can function as a basal transcription activator. Can act as a regulator of basal transcription for class II genes. The sequence is that of Activator of basal transcription 1 (Abt1) from Mus musculus (Mouse).